The following is a 216-amino-acid chain: Adenylate kinase (216 aa).

10–15 (GAGKGT) contacts ATP. The segment at 30-59 (STGDIFRAHMSQGTPLGKLAKEYVDAGKYV) is NMP. Residues Thr31, Arg36, 57-59 (KYV), 85-88 (GYPR), and Gln92 each bind AMP. Residues 126 to 163 (GRRVCRSCGATYHVRFNPPREAGRCDRCGGELYQRSDD) are LID. Residue Arg127 coordinates ATP. Cys130 and Cys133 together coordinate Zn(2+). 136–137 (TY) serves as a coordination point for ATP. Zn(2+)-binding residues include Cys150 and Cys153. 2 residues coordinate AMP: Arg160 and Arg171. Gln199 contributes to the ATP binding site.

This sequence belongs to the adenylate kinase family. In terms of assembly, monomer.

It is found in the cytoplasm. The enzyme catalyses AMP + ATP = 2 ADP. The protein operates within purine metabolism; AMP biosynthesis via salvage pathway; AMP from ADP: step 1/1. Functionally, catalyzes the reversible transfer of the terminal phosphate group between ATP and AMP. Plays an important role in cellular energy homeostasis and in adenine nucleotide metabolism. In Symbiobacterium thermophilum (strain DSM 24528 / JCM 14929 / IAM 14863 / T), this protein is Adenylate kinase.